The following is a 116-amino-acid chain: Putative pterin-4-alpha-carbinolamine dehydratase (116 aa).

It belongs to the pterin-4-alpha-carbinolamine dehydratase family.

The catalysed reaction is (4aS,6R)-4a-hydroxy-L-erythro-5,6,7,8-tetrahydrobiopterin = (6R)-L-erythro-6,7-dihydrobiopterin + H2O. The polypeptide is Putative pterin-4-alpha-carbinolamine dehydratase (Microcystis aeruginosa (strain NIES-843 / IAM M-2473)).